Consider the following 259-residue polypeptide: 3-deoxy-manno-octulosonate cytidylyltransferase (259 aa).

This sequence belongs to the KdsB family.

Its subcellular location is the cytoplasm. The enzyme catalyses 3-deoxy-alpha-D-manno-oct-2-ulosonate + CTP = CMP-3-deoxy-beta-D-manno-octulosonate + diphosphate. Its pathway is nucleotide-sugar biosynthesis; CMP-3-deoxy-D-manno-octulosonate biosynthesis; CMP-3-deoxy-D-manno-octulosonate from 3-deoxy-D-manno-octulosonate and CTP: step 1/1. It participates in bacterial outer membrane biogenesis; lipopolysaccharide biosynthesis. Functionally, activates KDO (a required 8-carbon sugar) for incorporation into bacterial lipopolysaccharide in Gram-negative bacteria. This is 3-deoxy-manno-octulosonate cytidylyltransferase from Xanthomonas oryzae pv. oryzae (strain KACC10331 / KXO85).